An 84-amino-acid chain; its full sequence is Large ribosomal subunit protein bL27 (84 aa).

Residues 1-21 are disordered; that stretch reads MAHKKGAGSTKNGRDSKPKML.

This sequence belongs to the bacterial ribosomal protein bL27 family.

The sequence is that of Large ribosomal subunit protein bL27 from Dehalococcoides mccartyi (strain ATCC BAA-2100 / JCM 16839 / KCTC 5957 / BAV1).